We begin with the raw amino-acid sequence, 176 residues long: Putative Ras-related protein RABA4e (176 aa).

This sequence belongs to the small GTPase superfamily. Rab family.

The protein is Putative Ras-related protein RABA4e (RABA4E) of Arabidopsis thaliana (Mouse-ear cress).